Reading from the N-terminus, the 205-residue chain is 5'-deoxynucleotidase HDDC2 (205 aa).

Residue alanine 2 is modified to N-acetylalanine. Phosphoserine occurs at positions 3 and 5. One can recognise an HD domain in the interval 47–149 (VSDHMYRMAV…VKQLDQCEMI (103 aa)). Positions 50, 78, 79, 82, 87, 88, and 144 each coordinate a divalent metal cation. Serine 205 carries the post-translational modification Phosphoserine.

Belongs to the HDDC2 family. In terms of assembly, homodimer. Mn(2+) serves as cofactor. Requires Co(2+) as cofactor. Mg(2+) is required as a cofactor.

It carries out the reaction a 2'-deoxyribonucleoside 5'-phosphate + H2O = a 2'-deoxyribonucleoside + phosphate. Functionally, catalyzes the dephosphorylation of the nucleoside 5'-monophosphates deoxyadenosine monophosphate (dAMP), deoxycytidine monophosphate (dCMP), deoxyguanosine monophosphate (dGMP) and deoxythymidine monophosphate (dTMP). The protein is 5'-deoxynucleotidase HDDC2 (HDDC2) of Bos taurus (Bovine).